The chain runs to 37 residues: Large ribosomal subunit protein bL36c (37 aa).

Belongs to the bacterial ribosomal protein bL36 family.

Its subcellular location is the plastid. The protein localises to the chloroplast. In Jasminum nudiflorum (Winter jasmine), this protein is Large ribosomal subunit protein bL36c.